The chain runs to 171 residues: Small ribosomal subunit protein bS16 (171 aa).

Residues 114-171 (EGGPTTEAAKPKKKAATSGAKKAAKAAEPEAAASEAAEPEAAAAPAEGGEQAESSAES) form a disordered region. The segment covering 142–171 (PEAAASEAAEPEAAAAPAEGGEQAESSAES) has biased composition (low complexity).

The protein belongs to the bacterial ribosomal protein bS16 family.

This Mycolicibacterium paratuberculosis (strain ATCC BAA-968 / K-10) (Mycobacterium paratuberculosis) protein is Small ribosomal subunit protein bS16.